Consider the following 152-residue polypeptide: Transcriptional regulator MraZ (152 aa).

2 consecutive SpoVT-AbrB domains span residues 5 to 52 and 81 to 124; these read ATQI…TLSE and ASEC…DEQA.

This sequence belongs to the MraZ family. As to quaternary structure, forms oligomers.

It is found in the cytoplasm. The protein resides in the nucleoid. Its function is as follows. Negatively regulates its own expression and that of the subsequent genes in the proximal part of the division and cell wall (dcw) gene cluster. Acts by binding directly to DNA. May also regulate the expression of genes outside the dcw cluster. This chain is Transcriptional regulator MraZ, found in Photorhabdus laumondii subsp. laumondii (strain DSM 15139 / CIP 105565 / TT01) (Photorhabdus luminescens subsp. laumondii).